A 208-amino-acid polypeptide reads, in one-letter code: Holliday junction branch migration complex subunit RuvA (208 aa).

Residues 1-63 are domain I; that stretch reads MIGMLTGRVE…QDAITLHGFL (63 aa). Residues 64–142 are domain II; that stretch reads DRDAKKTFLQ…LSQIEGASAQ (79 aa). Residues 143-151 are flexible linker; sequence AATSKSPVD. A domain III region spans residues 151-208; it reads DTGTEQVVEGLISLGWRQQDAQQAVAEACAENDIPTPLATDDVPRVLRLALALMDRGR.

It belongs to the RuvA family. In terms of assembly, homotetramer. Forms an RuvA(8)-RuvB(12)-Holliday junction (HJ) complex. HJ DNA is sandwiched between 2 RuvA tetramers; dsDNA enters through RuvA and exits via RuvB. An RuvB hexamer assembles on each DNA strand where it exits the tetramer. Each RuvB hexamer is contacted by two RuvA subunits (via domain III) on 2 adjacent RuvB subunits; this complex drives branch migration. In the full resolvosome a probable DNA-RuvA(4)-RuvB(12)-RuvC(2) complex forms which resolves the HJ.

It is found in the cytoplasm. Functionally, the RuvA-RuvB-RuvC complex processes Holliday junction (HJ) DNA during genetic recombination and DNA repair, while the RuvA-RuvB complex plays an important role in the rescue of blocked DNA replication forks via replication fork reversal (RFR). RuvA specifically binds to HJ cruciform DNA, conferring on it an open structure. The RuvB hexamer acts as an ATP-dependent pump, pulling dsDNA into and through the RuvAB complex. HJ branch migration allows RuvC to scan DNA until it finds its consensus sequence, where it cleaves and resolves the cruciform DNA. The protein is Holliday junction branch migration complex subunit RuvA of Bifidobacterium longum (strain DJO10A).